The following is a 435-amino-acid chain: Xylose isomerase (435 aa).

Active-site residues include His-99 and Asp-102. Residues Glu-230, Glu-266, His-269, Asp-294, Asp-305, Asp-307, and Asp-337 each contribute to the Mg(2+) site.

This sequence belongs to the xylose isomerase family. In terms of assembly, homotetramer. It depends on Mg(2+) as a cofactor.

It localises to the cytoplasm. It carries out the reaction alpha-D-xylose = alpha-D-xylulofuranose. This Enterococcus faecalis (strain ATCC 700802 / V583) protein is Xylose isomerase.